The sequence spans 89 residues: MKRIGAKKKPVYRIVVTDSRSRRDGAVIEEIGFYDPRANTEKGLPEVTLDVEAARRWLSHGARPSETVQGLLKRAQVYASPSSSTPDSD.

This sequence belongs to the bacterial ribosomal protein bS16 family.

This is Small ribosomal subunit protein bS16 from Gloeobacter violaceus (strain ATCC 29082 / PCC 7421).